A 730-amino-acid chain; its full sequence is Trimethylamine dehydrogenase (730 aa).

FMN-binding residues include Pro29, Cys31, Tyr61, and Glu104. Residue Cys31 is modified to S-6-FMN cysteine. 170 to 173 serves as a coordination point for substrate; sequence YGAH. The Proton donor role is filled by Tyr175. FMN-binding residues include Arg223, Asp268, Arg300, Ala322, and Arg323. Positions 346, 349, 352, and 365 each coordinate [4Fe-4S] cluster. Positions 401, 420, 421, 428, 471, and 675 each coordinate ADP.

The protein in the N-terminal section; belongs to the NADH:flavin oxidoreductase/NADH oxidase family. In terms of assembly, homodimer. Forms a ternary complex with the heterodimeric electron transfer flavoprotein. The cofactor is FMN. Requires [4Fe-4S] cluster as cofactor.

The enzyme catalyses trimethylamine + oxidized [electron-transfer flavoprotein] + H2O + H(+) = dimethylamine + reduced [electron-transfer flavoprotein] + formaldehyde. The sequence is that of Trimethylamine dehydrogenase from Methylophilus methylotrophus (Bacterium W3A1).